The chain runs to 427 residues: Dorsalin-1 (427 aa).

Residues 1 to 20 (MHYFGVLAALSVFNIIACLT) form the signal peptide. A propeptide spanning residues 21–318 (RGKPLENWKK…PRQHSSRSKR (298 aa)) is cleaved from the precursor. N-linked (GlcNAc...) asparagine glycosylation is found at Asn71, Asn136, Asn265, and Asn292. A disordered region spans residues 288 to 321 (KLGKNDSSSEEEQREEKAIARPRQHSSRSKRSIG). Residues 307–321 (ARPRQHSSRSKRSIG) show a composition bias toward basic residues. Cystine bridges form between Cys325-Cys391, Cys354-Cys424, and Cys358-Cys426.

It belongs to the TGF-beta family. Homodimer; disulfide-linked. In terms of tissue distribution, expressed selectively in the dorsal neural tube. Lower levels seen in kidney and myotomal cells.

It localises to the secreted. Functionally, appears to regulate cell differentiation within the neural tube. May regulate the differentiation of cell types along the dorsoventral axis of the neural tube, acting in conjunction with distinct ventralizing signals from the notochord and floor plate. Controls the cell differentiation in the neural tube in several ways: (1) promotes the differentiation of cell types that derive from the dorsal neural tube. (2) ensures that the dorsal neural tube is refractory to ventralizing species from the notochord. (3) can diffuse and influence the fate of cells in more ventral regions of the neural tube. This is Dorsalin-1 (DSL1) from Gallus gallus (Chicken).